Consider the following 505-residue polypeptide: ATP synthase subunit alpha (505 aa).

An ATP-binding site is contributed by 170–177; it reads GDRQTGKT.

It belongs to the ATPase alpha/beta chains family. In terms of assembly, F-type ATPases have 2 components, CF(1) - the catalytic core - and CF(0) - the membrane proton channel. CF(1) has five subunits: alpha(3), beta(3), gamma(1), delta(1), epsilon(1). CF(0) has four main subunits: a(1), b(1), b'(1) and c(9-12).

The protein localises to the cellular thylakoid membrane. The catalysed reaction is ATP + H2O + 4 H(+)(in) = ADP + phosphate + 5 H(+)(out). In terms of biological role, produces ATP from ADP in the presence of a proton gradient across the membrane. The alpha chain is a regulatory subunit. This chain is ATP synthase subunit alpha, found in Trichodesmium erythraeum (strain IMS101).